The sequence spans 187 residues: dTTP/UTP pyrophosphatase (187 aa).

The active-site Proton acceptor is aspartate 65.

This sequence belongs to the Maf family. YhdE subfamily. A divalent metal cation serves as cofactor.

It is found in the cytoplasm. It catalyses the reaction dTTP + H2O = dTMP + diphosphate + H(+). It carries out the reaction UTP + H2O = UMP + diphosphate + H(+). Its function is as follows. Nucleoside triphosphate pyrophosphatase that hydrolyzes dTTP and UTP. May have a dual role in cell division arrest and in preventing the incorporation of modified nucleotides into cellular nucleic acids. The polypeptide is dTTP/UTP pyrophosphatase (Pyrococcus abyssi (strain GE5 / Orsay)).